Reading from the N-terminus, the 223-residue chain is Ribose-5-phosphate isomerase A (223 aa).

Residues 32 to 35 (TGST), 85 to 88 (DGAD), and 98 to 101 (KGGG) each bind substrate. The active-site Proton acceptor is E107. Position 125 (K125) interacts with substrate.

The protein belongs to the ribose 5-phosphate isomerase family. In terms of assembly, homodimer.

It catalyses the reaction aldehydo-D-ribose 5-phosphate = D-ribulose 5-phosphate. It functions in the pathway carbohydrate degradation; pentose phosphate pathway; D-ribose 5-phosphate from D-ribulose 5-phosphate (non-oxidative stage): step 1/1. In terms of biological role, catalyzes the reversible conversion of ribose-5-phosphate to ribulose 5-phosphate. The sequence is that of Ribose-5-phosphate isomerase A from Pseudomonas fluorescens (strain ATCC BAA-477 / NRRL B-23932 / Pf-5).